The following is a 29-amino-acid chain: Cytolysin Oshem 1 (29 aa).

The protein resides in the secreted. It is found in the nematocyst. Its subcellular location is the target cell membrane. Its function is as follows. Cytolysin that shows moderate hemolysis and moderate myonecrosis. The protein is Cytolysin Oshem 1 of Olindias sambaquiensis (Hydromedusa).